The sequence spans 230 residues: MNENRTLMLNGMWNNNPALVQLLGLCPLLAVSSTVTNALGLGIATLLVLVGSNVTVSLVRDYVPKEVRIPVFVMIIASLVTCVQLLMNAYAYGLYLSLGIFIPLIVTNCIIIGRAEAFASKNDVLPAALDGFWMGLGMTSVLVVLGSLREIIGNGTLFDGADLLLGEWAKVLRIEVFHFDSAFLLALLPPGAFIGVGFLIAAKSVIDKQTAARQPKQQKQAIERARVTNV.

Helical transmembrane passes span leucine 39–valine 59, isoleucine 69–alanine 89, glycine 93–glycine 113, valine 124–valine 144, and alanine 182–alanine 202.

Belongs to the NqrDE/RnfAE family. In terms of assembly, the complex is composed of six subunits: RnfA, RnfB, RnfC, RnfD, RnfE and RnfG.

It is found in the cell inner membrane. Part of a membrane-bound complex that couples electron transfer with translocation of ions across the membrane. This is Ion-translocating oxidoreductase complex subunit E from Vibrio cholerae serotype O1 (strain ATCC 39315 / El Tor Inaba N16961).